Reading from the N-terminus, the 95-residue chain is Aspartyl/glutamyl-tRNA(Asn/Gln) amidotransferase subunit C (95 aa).

Belongs to the GatC family. In terms of assembly, heterotrimer of A, B and C subunits.

It catalyses the reaction L-glutamyl-tRNA(Gln) + L-glutamine + ATP + H2O = L-glutaminyl-tRNA(Gln) + L-glutamate + ADP + phosphate + H(+). The catalysed reaction is L-aspartyl-tRNA(Asn) + L-glutamine + ATP + H2O = L-asparaginyl-tRNA(Asn) + L-glutamate + ADP + phosphate + 2 H(+). Allows the formation of correctly charged Asn-tRNA(Asn) or Gln-tRNA(Gln) through the transamidation of misacylated Asp-tRNA(Asn) or Glu-tRNA(Gln) in organisms which lack either or both of asparaginyl-tRNA or glutaminyl-tRNA synthetases. The reaction takes place in the presence of glutamine and ATP through an activated phospho-Asp-tRNA(Asn) or phospho-Glu-tRNA(Gln). The protein is Aspartyl/glutamyl-tRNA(Asn/Gln) amidotransferase subunit C of Geobacter metallireducens (strain ATCC 53774 / DSM 7210 / GS-15).